A 147-amino-acid chain; its full sequence is Putative nickel-responsive regulator (147 aa).

Ni(2+) is bound by residues His76, His87, His89, and Cys95.

The protein belongs to the transcriptional regulatory CopG/NikR family. Ni(2+) serves as cofactor.

Transcriptional regulator. The protein is Putative nickel-responsive regulator of Rhodopseudomonas palustris (strain TIE-1).